We begin with the raw amino-acid sequence, 97 residues long: Co-chaperonin GroES (97 aa).

The protein belongs to the GroES chaperonin family. Heptamer of 7 subunits arranged in a ring. Interacts with the chaperonin GroEL.

The protein localises to the cytoplasm. Functionally, together with the chaperonin GroEL, plays an essential role in assisting protein folding. The GroEL-GroES system forms a nano-cage that allows encapsulation of the non-native substrate proteins and provides a physical environment optimized to promote and accelerate protein folding. GroES binds to the apical surface of the GroEL ring, thereby capping the opening of the GroEL channel. The chain is Co-chaperonin GroES from Pseudomonas entomophila (strain L48).